We begin with the raw amino-acid sequence, 458 residues long: SLIT-ROBO Rho GTPase-activating protein 2B (458 aa).

The region spanning 22–324 is the F-BAR domain; the sequence is KEIRAQLTEQ…AVENLDATSD (303 aa). Residues 181 to 203 are compositionally biased toward basic and acidic residues; the sequence is LKEAEKQEEKQIGKSVKQEDRQT. The interval 181–214 is disordered; sequence LKEAEKQEEKQIGKSVKQEDRQTPRSPDSTANVR. Residues 362–400 are a coiled coil; sequence QSELLQRCQQLQSRLSTLKIENEEVKKTMEATLQTIQDI.

May interact with SRGAP2; formation of the heterodimer alters SRGAP2 function.

Functionally, may regulate cell migration and differentiation through interaction with and inhibition of SRGAP2. In contrast to SRGAP2C, it is not able to induce long-lasting changes in synaptic density throughout adulthood. This chain is SLIT-ROBO Rho GTPase-activating protein 2B (SRGAP2B), found in Homo sapiens (Human).